Consider the following 721-residue polypeptide: YTH domain-containing protein 1 (721 aa).

Over residues glutamate 29–aspartate 38 the composition is skewed to acidic residues. The segment at glutamate 29–lysine 239 is disordered. The span at serine 48–serine 75 shows a compositional bias: low complexity. Residues alanine 135–proline 151 are compositionally biased toward basic and acidic residues. Positions threonine 254–phenylalanine 391 constitute a YTH domain. RNA contacts are provided by residues lysine 260–asparagine 262, tryptophan 276, and tryptophan 327. Disordered regions lie at residues proline 424–histidine 471, aspartate 580–proline 605, and alanine 651–arginine 721. The segment covering glycine 432 to glycine 443 has biased composition (gly residues). The segment covering proline 451–histidine 471 has biased composition (basic residues). Over residues glycine 583–glycine 600 the composition is skewed to pro residues. Positions alanine 651 to glycine 670 are enriched in gly residues. Positions arginine 699–glycine 708 are enriched in basic and acidic residues.

It is found in the nucleus. Its function is as follows. Regulator of alternative splicing that specifically recognizes and binds N6-methyladenosine (m6A)-containing RNAs. Acts by acting as a reader of m6A methylation. Required for sex determination and dosage compensation via Sxl alternative splicing: m6A methylation acts as a key regulator of Sxl pre-mRNA and promotes female-specific alternative splicing of Sxl, which determines female physiognomy. M6A methylation is also required for neuronal functions. The chain is YTH domain-containing protein 1 from Drosophila melanogaster (Fruit fly).